We begin with the raw amino-acid sequence, 626 residues long: Basic helix-loop-helix ARNT-like protein 1 (626 aa).

The disordered stretch occupies residues 1-60; sequence MADQRMDISSTISDFMSPGATDLLSSPLGTSGMDCNRKRKGSSTDYQESMDTDKDDPHGR. Ser17 bears the Phosphoserine; by GSK3-beta mark. At Thr21 the chain carries Phosphothreonine; by GSK3-beta. A Nuclear localization signal motif is present at residues 36-41; sequence NRKRKG. Over residues 51-60 the composition is skewed to basic and acidic residues; the sequence is DTDKDDPHGR. The region spanning 72–125 is the bHLH domain; sequence NAREAHSQIEKRRRDKMNSFIDELASLVPTCNAMSRKLDKLTVLRMAVQHMKTL. Ser78 bears the Phosphoserine mark. Ser90 is modified (phosphoserine; by CK2). Residues 142-152 carry the Nuclear export signal 1 motif; that stretch reads LSDDELKHLIL. A PAS 1 domain is found at 143–215; sequence SDDELKHLIL…EQLSSSDTAP (73 aa). Residue Lys252 forms a Glycyl lysine isopeptide (Lys-Gly) (interchain with G-Cter in SUMO2 and SUMO3) linkage. Lys259 is covalently cross-linked (Glycyl lysine isopeptide (Lys-Gly) (interchain with G-Cter in SUMO); alternate). Lys259 is covalently cross-linked (Glycyl lysine isopeptide (Lys-Gly) (interchain with G-Cter in SUMO2); alternate). The 71-residue stretch at 326-396 folds into the PAS 2 domain; that stretch reads PQPVNGEIRV…ECHRQVLQTR (71 aa). Residues 361–369 carry the Nuclear export signal 2 motif; that stretch reads LAYLPQELL. Residues 401–444 enclose the PAC domain; sequence TNCYKFKIKDGSFITLRSRWFSFMNPWTKEVEYIVSTNTVVLAN. Disordered regions lie at residues 457-493 and 510-597; these read TASP…AGAG and RGSS…SNDE. Residues 484-493 are compositionally biased toward gly residues; sequence IPGGTRAGAG. An interaction with CIART region spans residues 508–588; it reads RIRGSSPSSC…IGIDMIDNDQ (81 aa). A compositionally biased stretch (low complexity) spans 511–521; that stretch reads GSSPSSCGSSP. Lys538 is modified (N6-acetyllysine).

In terms of assembly, component of the circadian clock oscillator which includes the CRY1/2 proteins, CLOCK or NPAS2, BMAL1 or BMAL2, CSNK1D and/or CSNK1E, TIMELESS and the PER1/2/3 proteins. Forms a heterodimer with CLOCK. The CLOCK-BMAL1 heterodimer is required for E-box-dependent transactivation, for CLOCK nuclear translocation and degradation, and, for phosphorylation of both CLOCK and BMAL1. Part of a nuclear complex which also includes RACK1 and PRKCA; RACK1 and PRKCA are recruited to the complex in a circadian manner. Interacts with NPAS2. Interacts with EZH2. Interacts with SUMO3. Interacts with SIRT1. Interacts with AHR. Interacts with ID1, ID2 and ID3. Interacts with DDX4. Interacts with OGT. Interacts with EED and SUZ12. Interacts with MTA1. Interacts with CIART. Interacts with HSP90. Interacts with KAT2B and EP300. Interacts with BHLHE40/DEC1 and BHLHE41/DEC2. Interacts with RELB and the interaction is enhanced in the presence of CLOCK. Interacts with PER1, PER2, CRY1 and CRY2 and this interaction requires a translocation to the nucleus. Interaction of the CLOCK-BMAL1 heterodimer with PER or CRY inhibits transcription activation. Interaction of the CLOCK-BMAL1 with CRY1 is independent of DNA but with PER2 is off DNA. The CLOCK-BMAL1 heterodimer interacts with GSK3B. Interacts with KDM5A. Interacts with KMT2A; in a circadian manner. Interacts with UBE3A. Interacts with PRKCG. Interacts with MAGEL2. Interacts with NCOA2. Interacts with THRAP3. The CLOCK-BMAL1 heterodimer interacts with PASD1. Interacts with PASD1. Interacts with USP9X. Interacts with PIWIL2 (via PIWI domain). Interacts with HDAC3. Interacts with HNF4A. Post-translationally, ubiquitinated, leading to its proteasomal degradation. Deubiquitinated by USP9X. O-glycosylated; contains O-GlcNAc. O-glycosylation by OGT prevents protein degradation by inhibiting ubiquitination. It also stabilizes the CLOCK-BMAL1 heterodimer thereby increasing CLOCK-BMAL1-mediated transcription of genes in the negative loop of the circadian clock such as PER1/2/3 and CRY1/2. In terms of processing, acetylated on Lys-538 by CLOCK during the repression phase of the circadian cycle. Acetylation facilitates recruitment of CRY1 protein and initiates the repression phase of the circadian cycle. Acetylated at Lys-538 by KAT5 during the activation phase of the cycle, leading to recruitment of the positive transcription elongation factor b (P-TEFb) and BRD4, followed by productive elongation of circadian transcripts. Deacetylated by SIRT1, which may result in decreased protein stability. Post-translationally, phosphorylated upon dimerization with CLOCK. Phosphorylation enhances the transcriptional activity, alters the subcellular localization and decreases the stability of the CLOCK-BMAL1 heterodimer by promoting its degradation. Phosphorylation shows circadian variations in the liver with a peak between CT10 to CT14. Phosphorylation at Ser-90 by CK2 is essential for its nuclear localization, its interaction with CLOCK and controls CLOCK nuclear entry. Dephosphorylation at Ser-78 is important for dimerization with CLOCK and transcriptional activity. Sumoylated on Lys-259 upon dimerization with CLOCK. Predominantly conjugated to poly-SUMO2/3 rather than SUMO1 and the level of these conjugates undergo rhythmic variation, peaking at CT9-CT12. Sumoylation localizes it exclusively to the PML body and promotes its ubiquitination in the PML body, ubiquitin-dependent proteasomal degradation and the transcriptional activity of the CLOCK-BMAL1 heterodimer. In terms of processing, undergoes lysosome-mediated degradation in a time-dependent manner in the liver.

It localises to the nucleus. It is found in the cytoplasm. The protein localises to the PML body. Transcriptional activator which forms a core component of the circadian clock. The circadian clock, an internal time-keeping system, regulates various physiological processes through the generation of approximately 24 hour circadian rhythms in gene expression, which are translated into rhythms in metabolism and behavior. It is derived from the Latin roots 'circa' (about) and 'diem' (day) and acts as an important regulator of a wide array of physiological functions including metabolism, sleep, body temperature, blood pressure, endocrine, immune, cardiovascular, and renal function. Consists of two major components: the central clock, residing in the suprachiasmatic nucleus (SCN) of the brain, and the peripheral clocks that are present in nearly every tissue and organ system. Both the central and peripheral clocks can be reset by environmental cues, also known as Zeitgebers (German for 'timegivers'). The predominant Zeitgeber for the central clock is light, which is sensed by retina and signals directly to the SCN. The central clock entrains the peripheral clocks through neuronal and hormonal signals, body temperature and feeding-related cues, aligning all clocks with the external light/dark cycle. Circadian rhythms allow an organism to achieve temporal homeostasis with its environment at the molecular level by regulating gene expression to create a peak of protein expression once every 24 hours to control when a particular physiological process is most active with respect to the solar day. Transcription and translation of core clock components (CLOCK, NPAS2, BMAL1, BMAL2, PER1, PER2, PER3, CRY1 and CRY2) plays a critical role in rhythm generation, whereas delays imposed by post-translational modifications (PTMs) are important for determining the period (tau) of the rhythms (tau refers to the period of a rhythm and is the length, in time, of one complete cycle). A diurnal rhythm is synchronized with the day/night cycle, while the ultradian and infradian rhythms have a period shorter and longer than 24 hours, respectively. Disruptions in the circadian rhythms contribute to the pathology of cardiovascular diseases, cancer, metabolic syndromes and aging. A transcription/translation feedback loop (TTFL) forms the core of the molecular circadian clock mechanism. Transcription factors, CLOCK or NPAS2 and BMAL1 or BMAL2, form the positive limb of the feedback loop, act in the form of a heterodimer and activate the transcription of core clock genes and clock-controlled genes (involved in key metabolic processes), harboring E-box elements (5'-CACGTG-3') within their promoters. The core clock genes: PER1/2/3 and CRY1/2 which are transcriptional repressors form the negative limb of the feedback loop and interact with the CLOCK|NPAS2-BMAL1|BMAL2 heterodimer inhibiting its activity and thereby negatively regulating their own expression. This heterodimer also activates nuclear receptors NR1D1, NR1D2, RORA, RORB and RORG, which form a second feedback loop and which activate and repress BMAL1 transcription, respectively. BMAL1 positively regulates myogenesis and negatively regulates adipogenesis via the transcriptional control of the genes of the canonical Wnt signaling pathway. Plays a role in normal pancreatic beta-cell function; regulates glucose-stimulated insulin secretion via the regulation of antioxidant genes NFE2L2/NRF2 and its targets SESN2, PRDX3, CCLC and CCLM. Negatively regulates the mTORC1 signaling pathway; regulates the expression of MTOR and DEPTOR. Controls diurnal oscillations of Ly6C inflammatory monocytes; rhythmic recruitment of the PRC2 complex imparts diurnal variation to chemokine expression that is necessary to sustain Ly6C monocyte rhythms. Regulates the expression of HSD3B2, STAR, PTGS2, CYP11A1, CYP19A1 and LHCGR in the ovary and also the genes involved in hair growth. Plays an important role in adult hippocampal neurogenesis by regulating the timely entry of neural stem/progenitor cells (NSPCs) into the cell cycle and the number of cell divisions that take place prior to cell-cycle exit. Regulates the circadian expression of CIART. The CLOCK-BMAL1 heterodimer regulates the circadian expression of SERPINE1/PAI1, VWF, B3, CCRN4L/NOC, NAMPT, DBP, MYOD1, PPARGC1A, PPARGC1B, SIRT1, GYS2, F7, NGFR, GNRHR, BHLHE40/DEC1, ATF4, MTA1 and also genes implicated in glucose and lipid metabolism. Promotes rhythmic chromatin opening, regulating the DNA accessibility of other transcription factors. The NPAS2-BMAL1 heterodimer positively regulates the expression of MAOA, F7 and LDHA and modulates the circadian rhythm of daytime contrast sensitivity by regulating the rhythmic expression of adenylate cyclase type 1 (ADCY1) in the retina. The preferred binding motif for the CLOCK-BMAL1 heterodimer is 5'-CACGTGA-3', which contains a flanking adenine nucleotide at the 3-prime end of the canonical 6-nucleotide E-box sequence. CLOCK specifically binds to the half-site 5'-CAC-3', while BMAL1 binds to the half-site 5'-GTGA-3'. The CLOCK-BMAL1 heterodimer also recognizes the non-canonical E-box motifs 5'-AACGTGA-3' and 5'-CATGTGA-3'. Essential for the rhythmic interaction of CLOCK with ASS1 and plays a critical role in positively regulating CLOCK-mediated acetylation of ASS1. Plays a role in protecting against lethal sepsis by limiting the expression of immune checkpoint protein CD274 in macrophages in a PKM2-dependent manner. Regulates the diurnal rhythms of skeletal muscle metabolism via transcriptional activation of genes promoting triglyceride synthesis (DGAT2) and metabolic efficiency (COQ10B). This chain is Basic helix-loop-helix ARNT-like protein 1 (BMAL1), found in Equus caballus (Horse).